The primary structure comprises 812 residues: Plasminogen (812 aa).

The first 19 residues, 1 to 19, serve as a signal peptide directing secretion; it reads MDHKEVILLFLLLLKPGQG. Positions 20–98 constitute a PAN domain; sequence DSLDGYISTQ…RDVILFEKRV (79 aa). Intrachain disulfides connect C49/C73, C53/C61, C103/C181, C124/C164, C152/C176, C185/C262, C188/C316, C206/C245, C234/C257, C275/C352, C296/C335, C324/C347, C377/C454, C398/C437, C426/C449, C481/C560, C502/C543, C531/C555, C568/C687, C578/C586, and C609/C625. 5 Kringle domains span residues 103–181, 184–262, 275–352, 377–454, and 481–560; these read CKTG…IPEC, ECMY…IPRC, CLKG…IPSC, CYQS…LKRC, and CMYG…IPLC. A Peptidase S1 domain is found at 582–810; sequence VVGGCVANPH…FVDWIEREMR (229 aa). Phosphoserine is present on S598. Active-site charge relay system residues include H624 and D667. Residue S690 is modified to Phosphoserine. 3 cysteine pairs are disulfide-bonded: C701–C768, C731–C747, and C758–C786. Residue S762 is the Charge relay system of the active site.

It belongs to the peptidase S1 family. Plasminogen subfamily. As to quaternary structure, interacts (both mature PLG and the angiostatin peptide) with AMOT and CSPG4. Interacts (via the Kringle domains) with HRG; the interaction tethers PLG to the cell surface and enhances its activation. Interacts (via Kringle 4 domain) with ADA; the interaction stimulates PLG activation when in complex with DPP4. Angiostatin: Interacts with ATP5F1A; the interaction inhibits most of the angiogenic effects of angiostatin. In terms of processing, in the presence of the inhibitor, the activation involves only cleavage after Arg-581, yielding two chains held together by two disulfide bonds. In the absence of the inhibitor, the activation involves additionally the removal of the activation peptide.

The protein resides in the secreted. It catalyses the reaction Preferential cleavage: Lys-|-Xaa &gt; Arg-|-Xaa, higher selectivity than trypsin. Converts fibrin into soluble products.. Its activity is regulated as follows. Converted into plasmin by plasminogen activators, both plasminogen and its activator being bound to fibrin. Cannot be activated with streptokinase. Functionally, plasmin dissolves the fibrin of blood clots and acts as a proteolytic factor in a variety of other processes including embryonic development, tissue remodeling, tumor invasion, and inflammation. In ovulation, weakens the walls of the Graafian follicle. It activates the urokinase-type plasminogen activator, collagenases and several complement zymogens, such as C1, C4 and C5. Cleavage of fibronectin and laminin leads to cell detachment and apoptosis. Also cleaves fibrin, thrombospondin and von Willebrand factor. Its role in tissue remodeling and tumor invasion may be modulated by CSPG4. Binds to cells. In terms of biological role, angiostatin is an angiogenesis inhibitor that blocks neovascularization and growth of experimental primary and metastatic tumors in vivo. The sequence is that of Plasminogen (Plg) from Mus musculus (Mouse).